The sequence spans 691 residues: Elongation factor G (691 aa).

A tr-type G domain is found at 8–283; that stretch reads EDYRNIGIMA…AVVDFLPSPL (276 aa). Residues 17–24, 81–85, and 135–138 each bind GTP; these read AHIDAGKT, DTPGH, and NKMD.

This sequence belongs to the TRAFAC class translation factor GTPase superfamily. Classic translation factor GTPase family. EF-G/EF-2 subfamily.

The protein localises to the cytoplasm. Its function is as follows. Catalyzes the GTP-dependent ribosomal translocation step during translation elongation. During this step, the ribosome changes from the pre-translocational (PRE) to the post-translocational (POST) state as the newly formed A-site-bound peptidyl-tRNA and P-site-bound deacylated tRNA move to the P and E sites, respectively. Catalyzes the coordinated movement of the two tRNA molecules, the mRNA and conformational changes in the ribosome. The sequence is that of Elongation factor G from Parvibaculum lavamentivorans (strain DS-1 / DSM 13023 / NCIMB 13966).